The primary structure comprises 817 residues: Nuclear hormone receptor family member nhr-48 (817 aa).

The segment at 49-91 (YNDDKDDPFYEDEGSGGGTSGGGKKSSRKRANTTSSSGGNEKE) is disordered. The span at 52–62 (DKDDPFYEDEG) shows a compositional bias: acidic residues. The segment covering 63–72 (SGGGTSGGGK) has biased composition (gly residues). The nuclear receptor DNA-binding region spans 97 to 172 (NKVCRVCGDK…VGMKKEWIMS (76 aa)). 2 NR C4-type zinc fingers span residues 100 to 120 (CRVC…CESC) and 136 to 155 (CPFN…CQRC). Acidic residues predominate over residues 202 to 212 (ACMEDESENSY). Disordered stretches follow at residues 202-221 (ACME…PSHQ) and 258-284 (MNFY…SSQL). Positions 273 to 284 (LPSNSCASSSQL) are enriched in polar residues.

The protein belongs to the nuclear hormone receptor family.

The protein localises to the nucleus. Its function is as follows. Orphan nuclear receptor. In Caenorhabditis elegans, this protein is Nuclear hormone receptor family member nhr-48 (nhr-48).